The following is a 281-amino-acid chain: Nucleoid occlusion protein (281 aa).

The segment at 1-24 (MKHPFSRLFSFGEKEQEEMEEKQE) is disordered. A DNA-binding region (H-T-H motif) is located at residues 145-164 (EALAQRLGKGQSTIANKLRL).

It belongs to the ParB family.

The protein resides in the cytoplasm. It is found in the nucleoid. In terms of biological role, effects nucleoid occlusion by binding relatively nonspecifically to DNA and preventing the assembly of the division machinery in the vicinity of the nucleoid, especially under conditions that disturb the cell cycle. It helps to coordinate cell division and chromosome segregation by preventing the formation of the Z ring through the nucleoid, which would cause chromosome breakage. This Geobacillus kaustophilus (strain HTA426) protein is Nucleoid occlusion protein.